The chain runs to 192 residues: uncharacterized protein (192 aa).

The Nudix hydrolase domain occupies 29–160 (HRQAAVLIPI…PLDIYRRGDS (132 aa)). The Nudix box signature appears at 67–89 (GAVDDTDASVIAAALREAEEEVA). 2 residues coordinate Mg(2+): E83 and E87.

It belongs to the Nudix hydrolase family. PCD1 subfamily. It depends on Mn(2+) as a cofactor. The cofactor is Mg(2+).

Functionally, probably mediates the hydrolysis of some nucleoside diphosphate derivatives. This is an uncharacterized protein from Shigella sonnei (strain Ss046).